Reading from the N-terminus, the 212-residue chain is Thymidylate kinase (212 aa).

An ATP-binding site is contributed by 10–17; sequence GLDGAGKT.

The protein belongs to the thymidylate kinase family.

The catalysed reaction is dTMP + ATP = dTDP + ADP. Functionally, phosphorylation of dTMP to form dTDP in both de novo and salvage pathways of dTTP synthesis. The chain is Thymidylate kinase from Blochmanniella pennsylvanica (strain BPEN).